The sequence spans 327 residues: DNA-directed RNA polymerase subunit alpha (327 aa).

The alpha N-terminal domain (alpha-NTD) stretch occupies residues 1–233; it reads MVREKVKVST…NLFIPFLHVE (233 aa). The segment at 267 to 327 is alpha C-terminal domain (alpha-CTD); sequence LAFQYIFIDQ…KKILDILEKK (61 aa).

It belongs to the RNA polymerase alpha chain family. As to quaternary structure, in plastids the minimal PEP RNA polymerase catalytic core is composed of four subunits: alpha, beta, beta', and beta''. When a (nuclear-encoded) sigma factor is associated with the core the holoenzyme is formed, which can initiate transcription.

The protein localises to the plastid. The protein resides in the chloroplast. The enzyme catalyses RNA(n) + a ribonucleoside 5'-triphosphate = RNA(n+1) + diphosphate. DNA-dependent RNA polymerase catalyzes the transcription of DNA into RNA using the four ribonucleoside triphosphates as substrates. The polypeptide is DNA-directed RNA polymerase subunit alpha (Lepidium virginicum (Virginia pepperweed)).